Here is a 350-residue protein sequence, read N- to C-terminus: Ferredoxin--NADP reductase (350 aa).

Residues Thr-22, Glu-41, Gln-49, Tyr-54, Val-94, Phe-129, Asp-295, and Ser-336 each coordinate FAD.

The protein belongs to the ferredoxin--NADP reductase type 2 family. Homodimer. FAD serves as cofactor.

The enzyme catalyses 2 reduced [2Fe-2S]-[ferredoxin] + NADP(+) + H(+) = 2 oxidized [2Fe-2S]-[ferredoxin] + NADPH. The polypeptide is Ferredoxin--NADP reductase (Chlorobium luteolum (strain DSM 273 / BCRC 81028 / 2530) (Pelodictyon luteolum)).